The primary structure comprises 162 residues: Auracyanin-A (162 aa).

The first 22 residues, 1–22 (MKITLRMMVLAVLTAMAMVLAA), serve as a signal peptide directing secretion. C23 is lipidated: N-palmitoyl cysteine. C23 is lipidated: S-diacylglycerol cysteine. The 121-residue stretch at 42–162 (VTIEIGSKGE…PLMQGKLVVN (121 aa)) folds into the Plastocyanin-like domain. 4 residues coordinate Cu cation: H81, C146, H151, and M155.

Monomer. Cu cation serves as cofactor.

It localises to the cell membrane. Its function is as follows. Probably a soluble electron acceptor for the integral membrane protein electron transfer alternative complex III (ACIII). The polypeptide is Auracyanin-A (Chloroflexus aurantiacus (strain ATCC 29366 / DSM 635 / J-10-fl)).